A 225-amino-acid chain; its full sequence is Ribosomal RNA small subunit methyltransferase G (225 aa).

S-adenosyl-L-methionine is bound by residues Gly71, Leu76, 121-122, and Arg139; that span reads AE. Positions 204-225 are disordered; that stretch reads VVEARRATPSNGRGRPGRSSRR.

The protein belongs to the methyltransferase superfamily. RNA methyltransferase RsmG family.

It localises to the cytoplasm. Its function is as follows. Specifically methylates the N7 position of guanine in position 518 of 16S rRNA. This chain is Ribosomal RNA small subunit methyltransferase G, found in Mycobacterium sp. (strain JLS).